The following is a 500-amino-acid chain: NAD(P)H-quinone oxidoreductase chain 4, chloroplastic (500 aa).

Helical transmembrane passes span 4 to 24 (FPWLTIIVVLPIFAGSSIFFF), 37 to 57 (ICICLLELLLTTYAFCYHFQL), 84 to 104 (GLSIGPILLTGFITTLATLAA), 111 to 129 (SRLFHFLMLAMYSGQIGSF), 134 to 154 (LLLFFIMWELELIPVYLLLSM), 167 to 187 (FILYTAGGSIFLLMGVPGMGL), 208 to 228 (ALEIIFYFGFLIAYAVKSPII), 242 to 262 (HYSTCMLLAGILLKMGAYGLV), 272 to 292 (AHSIFSPWLMIVGTIQIIYAA), 305 to 325 (IAYSSVSHMGFTIIGIGSITD), 330 to 350 (GAILQIISHGFIGAALFFLAG), 374 to 396 (IFTMFSSFSMASLALPGMSGFVA), 416 to 436 (ILITFVMAIGMILTPIYSLSM), and 462 to 482 (LFVSICIFLPVIGIGIYPDFV).

This sequence belongs to the complex I subunit 4 family.

It is found in the plastid. The protein resides in the chloroplast thylakoid membrane. It catalyses the reaction a plastoquinone + NADH + (n+1) H(+)(in) = a plastoquinol + NAD(+) + n H(+)(out). It carries out the reaction a plastoquinone + NADPH + (n+1) H(+)(in) = a plastoquinol + NADP(+) + n H(+)(out). This chain is NAD(P)H-quinone oxidoreductase chain 4, chloroplastic, found in Liriodendron tulipifera (Tuliptree).